We begin with the raw amino-acid sequence, 315 residues long: Glutaminase (315 aa).

Residues Ser-70, Asn-120, Glu-166, Asn-173, Tyr-197, Tyr-249, and Val-267 each contribute to the substrate site.

Belongs to the glutaminase family. As to quaternary structure, homotetramer.

It carries out the reaction L-glutamine + H2O = L-glutamate + NH4(+). The sequence is that of Glutaminase from Mesorhizobium japonicum (strain LMG 29417 / CECT 9101 / MAFF 303099) (Mesorhizobium loti (strain MAFF 303099)).